Consider the following 935-residue polypeptide: Probable mediator of RNA polymerase II transcription subunit 15c (935 aa).

Over residues 1 to 13 the composition is skewed to polar residues; that stretch reads MEGNTNWKPNEQG. 5 disordered regions span residues 1-28, 170-190, 495-526, 548-611, and 635-654; these read MEGNTNWKPNEQGGNRDAANNRIDWRSQ, NLPTSRPNNRDQQGAFQVSSS, SSVQSLQKQKRFHHRQMQQQQPQQGNHQHQMQ, QQVS…PVPG, and SSSKLGTQETPLLFVPPPEP. Low complexity predominate over residues 511 to 526; sequence MQQQQPQQGNHQHQMQ. Polar residues-rich tracts occupy residues 548 to 577 and 635 to 644; these read QQVSSSQRQVPKQESNVSSSQIQNHSSPQL and SSSKLGTQET.

Belongs to the plant Mediator complex subunit 15 family. In terms of assembly, component of the Mediator complex.

The protein resides in the nucleus. In terms of biological role, component of the Mediator complex, a coactivator involved in the regulated transcription of nearly all RNA polymerase II-dependent genes. Mediator functions as a bridge to convey information from gene-specific regulatory proteins to the basal RNA polymerase II transcription machinery. The Mediator complex, having a compact conformation in its free form, is recruited to promoters by direct interactions with regulatory proteins and serves for the assembly of a functional preinitiation complex with RNA polymerase II and the general transcription factors. This Arabidopsis thaliana (Mouse-ear cress) protein is Probable mediator of RNA polymerase II transcription subunit 15c (MED15C).